Here is a 140-residue protein sequence, read N- to C-terminus: Endoribonuclease YbeY (140 aa).

Residues H105, H109, and D115 each coordinate Zn(2+).

Belongs to the endoribonuclease YbeY family. Requires Zn(2+) as cofactor.

Its subcellular location is the cytoplasm. In terms of biological role, single strand-specific metallo-endoribonuclease involved in late-stage 70S ribosome quality control and in maturation of the 3' terminus of the 16S rRNA. The sequence is that of Endoribonuclease YbeY from Flavobacterium psychrophilum (strain ATCC 49511 / DSM 21280 / CIP 103535 / JIP02/86).